Reading from the N-terminus, the 288-residue chain is Formamidopyrimidine-DNA glycosylase (288 aa).

The Schiff-base intermediate with DNA role is filled by Pro-2. Glu-3 (proton donor) is an active-site residue. The active-site Proton donor; for beta-elimination activity is Lys-59. Residues His-93, Arg-112, and Lys-168 each coordinate DNA. An FPG-type zinc finger spans residues Asn-254–Arg-288. Arg-278 serves as the catalytic Proton donor; for delta-elimination activity.

The protein belongs to the FPG family. In terms of assembly, monomer. Requires Zn(2+) as cofactor.

The enzyme catalyses Hydrolysis of DNA containing ring-opened 7-methylguanine residues, releasing 2,6-diamino-4-hydroxy-5-(N-methyl)formamidopyrimidine.. The catalysed reaction is 2'-deoxyribonucleotide-(2'-deoxyribose 5'-phosphate)-2'-deoxyribonucleotide-DNA = a 3'-end 2'-deoxyribonucleotide-(2,3-dehydro-2,3-deoxyribose 5'-phosphate)-DNA + a 5'-end 5'-phospho-2'-deoxyribonucleoside-DNA + H(+). Its function is as follows. Involved in base excision repair of DNA damaged by oxidation or by mutagenic agents. Acts as a DNA glycosylase that recognizes and removes damaged bases. Has a preference for oxidized purines, such as 7,8-dihydro-8-oxoguanine (8-oxoG). Has AP (apurinic/apyrimidinic) lyase activity and introduces nicks in the DNA strand. Cleaves the DNA backbone by beta-delta elimination to generate a single-strand break at the site of the removed base with both 3'- and 5'-phosphates. The polypeptide is Formamidopyrimidine-DNA glycosylase (Corynebacterium jeikeium (strain K411)).